The following is a 193-amino-acid chain: Cryptic protein (193 aa).

A signal peptide spans 1–25; it reads MFWRKHVRILFTVTLIWQAIHLGKG. N-linked (GlcNAc...) asparagine glycosylation is found at N38 and N60. Cystine bridges form between C91–C103 and C105–C114. The region spanning 91–115 is the EGF-like domain; that stretch reads CQNGGTCILGAFCACPKHFSGRHCE.

Belongs to the EGF-CFC (Cripto-1/FRL1/Cryptic) family.

The protein localises to the cell membrane. It localises to the secreted. May play a role in mesoderm and/or neural patterning during gastrulation. The sequence is that of Cryptic protein (CFC1) from Gallus gallus (Chicken).